Here is a 254-residue protein sequence, read N- to C-terminus: Protein Thf1 (254 aa).

The stretch at 182-241 forms a coiled coil; that stretch reads EEKMKKDLDLYRSNLEKMNQVLEVLEDALAVERQRREKAEAEAKAKTAEATVATETNDEQ. The segment covering 215 to 228 has biased composition (basic and acidic residues); sequence QRREKAEAEAKAKT. The tract at residues 215–254 is disordered; the sequence is QRREKAEAEAKAKTAEATVATETNDEQDEQKETSESGSDA.

It belongs to the THF1 family.

Its function is as follows. May be involved in photosynthetic membrane biogenesis. This chain is Protein Thf1, found in Picosynechococcus sp. (strain ATCC 27264 / PCC 7002 / PR-6) (Agmenellum quadruplicatum).